The chain runs to 499 residues: MSIGEVSDSAGHLASLVLPIEVAPIAPLIPEPPATAEHIFTLRHVYHHGTHKHPSLHRKHDVTPSNADVWLAAEDGYEAERIGPLRARSNALRIQRLVDRRPSVVDPMVAQSRQQGFVSVLSPSAWTVDDVAGPDVTDKGTVLTMALMAANAYVEGPGKADWQDVGAPFNRSLDFGWEGDGLRGHVFADENNSTIVIGLKGTSPAVFDGDGTTTNDKVNDNLFFSCCCAQQGPWTWHQVCDCATGTYTCNNTCVTQALREENRYYQAARELYANVTEVYPDSHVWIAGHSLGGAVSSFLGLTYGVPVVTFQAVPDALPAGRLGLPVPPGADPNAPQSRDYTGAFHFGHTADPIYMGSCNGATASCSFAGYALESACHTGHECVYDTVGDKGWRVGIGTHKIVAVIRDVILKYDTVPECKFTPECRDCGNWKMYESNGTETTTTSSAPTTTSISRTRTETCKTPHLKSQQQRQRPRPRPLHALPQWEGGNPDSPERNEEM.

Residues 1 to 9 lie on the Cytoplasmic side of the membrane; the sequence is MSIGEVSDS. Residues 10-30 traverse the membrane as a helical; Signal-anchor for type II membrane protein segment; it reads AGHLASLVLPIEVAPIAPLIP. Residues 31-499 lie on the Lumenal side of the membrane; it reads EPPATAEHIF…PDSPERNEEM (469 aa). Residues asparagine 170, asparagine 191, asparagine 192, asparagine 250, and asparagine 274 are each glycosylated (N-linked (GlcNAc...) asparagine). Serine 290 (charge relay system) is an active-site residue. N-linked (GlcNAc...) asparagine glycosylation occurs at asparagine 436. The disordered stretch occupies residues 436–499; it reads NGTETTTTSS…PDSPERNEEM (64 aa). Residues 438–454 show a composition bias toward low complexity; that stretch reads TETTTTSSAPTTTSISR.

Belongs to the AB hydrolase superfamily. Lipase family. As to quaternary structure, binds to both phosphatidylinositol (PI) and phosphatidylinositol 3,5-bisphosphate (PIP2).

The protein resides in the endosome. Its subcellular location is the multivesicular body membrane. The protein localises to the prevacuolar compartment membrane. The catalysed reaction is a triacylglycerol + H2O = a diacylglycerol + a fatty acid + H(+). In terms of biological role, lipase which is essential for lysis of subvacuolar cytoplasm to vacuole targeted bodies and intravacuolar autophagic bodies. Involved in the lysis of intravacuolar multivesicular body (MVB) vesicles. The intravacuolar membrane disintegration by atg15 is critical to life span extension. The sequence is that of Putative lipase atg15 (atg15) from Chaetomium globosum (strain ATCC 6205 / CBS 148.51 / DSM 1962 / NBRC 6347 / NRRL 1970) (Soil fungus).